The primary structure comprises 122 residues: Small ribosomal subunit protein bS6 (122 aa).

This sequence belongs to the bacterial ribosomal protein bS6 family.

Binds together with bS18 to 16S ribosomal RNA. The chain is Small ribosomal subunit protein bS6 from Neisseria gonorrhoeae (strain ATCC 700825 / FA 1090).